We begin with the raw amino-acid sequence, 470 residues long: Sorting nexin-17 (470 aa).

One can recognise a PX domain in the interval 1 to 109 (MHFSIPETES…SFLRRAQQET (109 aa)). Residues R36, S38, K62, and R75 each contribute to the a 1,2-diacyl-sn-glycero-3-phospho-(1D-myo-inositol-3-phosphate) site. Residues 115-206 (EEVSLEVLLS…YKIVLRKSYW (92 aa)) form the Ras-associating domain. Residues 115–432 (EEVSLEVLLS…DASRESMVKL (318 aa)) are FERM-like. The PTB-like F3 module stretch occupies residues 270-432 (GYLRFDACVA…DASRESMVKL (163 aa)). 7 positions are modified to phosphoserine: S336, S407, S409, S415, S421, S437, and S440. The disordered stretch occupies residues 400 to 426 (VGGTLRRSDSQQAVKSPPLLESPDASR).

The protein belongs to the sorting nexin family. As to quaternary structure, monomer. Interacts with APP (via cytoplasmic YXNPXY motif). Interacts with KIF1B. Interacts with the C-termini of P-selectin, PTC, LDLR, VLDLR, LRP1 and LRP8. Interacts with KRIT1 (via N-terminus). Interacts with HRAS. Interacts with ITGB1 and ITGB5 (via NPxY motif). Interacts with CCDC22 and CCDC93; the interaction associates SNX17 with the CCC complex. Interacts (via C-terminus) with VPS26C and VPS35L; the interactions are direct and associate SNX17 with the retriever complex.

It localises to the cytoplasm. The protein localises to the early endosome. The protein resides in the cytoplasmic vesicle membrane. Its function is as follows. Critical regulator of endosomal recycling of numerous surface proteins, including integrins, signaling receptor and channels. Binds to NPxY sequences in the cytoplasmic tails of target cargos. Associates with retriever and CCC complexes to prevent lysosomal degradation and promote cell surface recycling of numerous cargos such as integrins ITGB1, ITGB5 and their associated alpha subunits. Also required for maintenance of normal cell surface levels of APP and LRP1. Interacts with membranes containing phosphatidylinositol 3-phosphate (PtdIns(3P)). The protein is Sorting nexin-17 (SNX17) of Bos taurus (Bovine).